The chain runs to 759 residues: Na(+)/H(+) exchanger beta (759 aa).

Residues 1–14 (MPAFSCAFPGCRRD) are Cytoplasmic-facing. The helical transmembrane segment at 15-34 (LLVIVLVVFVGIGLPIEASA) threads the bilayer. Residues 35–75 (PAYQSHGTEGSHLTNITNTKKAFPVLAVNYEHVRKPFEIAL) lie on the Extracellular side of the membrane. N49 carries N-linked (GlcNAc...) asparagine glycosylation. Residues 76–95 (WILLALLMKLGFHLIPRLSA) traverse the membrane as a helical segment. Over 96–97 (VV) the chain is Cytoplasmic. The chain crosses the membrane as a helical span at residues 98-117 (PESCLLIVVGLLVGGLIKVI). Residues 118-122 (GEEPP) lie on the Extracellular side of the membrane. A helical transmembrane segment spans residues 123–142 (VLDSQLFFLCLLPPIILDAG). Over 143-149 (YFLPIRP) the chain is Cytoplasmic. Residues 150 to 169 (FTENVGTILVFAVIGTLWNA) traverse the membrane as a helical segment. The Extracellular portion of the chain corresponds to 170–195 (FFMGGLLYALCQIESVGLSGVDLLAC). Residues 196–214 (LLFGSIVSAVDPVAVLAVF) traverse the membrane as a helical segment. The Cytoplasmic segment spans residues 215 to 225 (EEIHINELVHI). A helical transmembrane segment spans residues 226-244 (LVFGESLLNDAVTVVLYNL). Topologically, residues 245-261 (FEEFSKVGTVTVLDVFL) are extracellular. The chain crosses the membrane as a helical span at residues 262-282 (GVVCFFVVSLGGVLVGAIYGF). The Cytoplasmic portion of the chain corresponds to 283 to 311 (LAAFTSRFTSHTRVIEPLFVFLYSYMAYL). Residues 312 to 330 (SSEMFHLSGIMALIACGVV) form a helical membrane-spanning segment. The Extracellular portion of the chain corresponds to 331–352 (MRPYVEANISHKSYTTIKYFLK). The N-linked (GlcNAc...) asparagine glycan is linked to N338. Residues 353–372 (MWSSVSETLIFIFLGVSTVA) form a helical membrane-spanning segment. Residues 373-376 (GPHA) are Cytoplasmic-facing. Residues 377-398 (WNWTFVITTVILCLVSRVLGVI) traverse the membrane as a helical segment. Residues 399–446 (GLTFIINKFRIVKLTKKDQFIVAYGGLRGAIAFSLGYLLSNSHQMRNL) are Extracellular-facing. A helical transmembrane segment spans residues 447–467 (FLTAIITVIFFTVFVQGMTIR). Topologically, residues 468–759 (PLVELLAVKK…KEDDDPFMSC (292 aa)) are cytoplasmic. Phosphoserine; by PKA occurs at positions 641 and 648. Residues 681–759 (FPTVHFEQPS…KEDDDPFMSC (79 aa)) are disordered. Positions 707–719 (VPKRPSLKADIEG) are enriched in basic and acidic residues.

This sequence belongs to the monovalent cation:proton antiporter 1 (CPA1) transporter (TC 2.A.36) family. Activated by cAMP, protein kinase A and protein kinase C.

The protein localises to the basolateral cell membrane. In terms of biological role, involved in pH regulation to eliminate acids generated by active metabolism or to counter adverse environmental conditions. Major proton extruding system driven by the inward sodium ion chemical gradient. This is Na(+)/H(+) exchanger beta from Oncorhynchus mykiss (Rainbow trout).